The primary structure comprises 164 residues: UPF0201 protein MA_4659 (164 aa).

It belongs to the UPF0201 family.

This chain is UPF0201 protein MA_4659, found in Methanosarcina acetivorans (strain ATCC 35395 / DSM 2834 / JCM 12185 / C2A).